The primary structure comprises 440 residues: Glutamyl-tRNA reductase (440 aa).

Substrate is bound by residues 50–53, S109, 114–116, and Q120; these read TCNR and EPQ. The Nucleophile role is filled by C51. 189-194 serves as a coordination point for NADP(+); it reads GAGEMA.

Belongs to the glutamyl-tRNA reductase family. In terms of assembly, homodimer.

The enzyme catalyses (S)-4-amino-5-oxopentanoate + tRNA(Glu) + NADP(+) = L-glutamyl-tRNA(Glu) + NADPH + H(+). Its pathway is porphyrin-containing compound metabolism; protoporphyrin-IX biosynthesis; 5-aminolevulinate from L-glutamyl-tRNA(Glu): step 1/2. Functionally, catalyzes the NADPH-dependent reduction of glutamyl-tRNA(Glu) to glutamate 1-semialdehyde (GSA). In Nitratidesulfovibrio vulgaris (strain ATCC 29579 / DSM 644 / CCUG 34227 / NCIMB 8303 / VKM B-1760 / Hildenborough) (Desulfovibrio vulgaris), this protein is Glutamyl-tRNA reductase.